The sequence spans 105 residues: UPF0235 protein A1E_05380 (105 aa).

Belongs to the UPF0235 family.

This is UPF0235 protein A1E_05380 from Rickettsia canadensis (strain McKiel).